Consider the following 293-residue polypeptide: Formamidopyrimidine-DNA glycosylase (293 aa).

The active-site Schiff-base intermediate with DNA is the Pro-2. The active-site Proton donor is the Glu-3. Catalysis depends on Lys-58, which acts as the Proton donor; for beta-elimination activity. Residues His-104, Arg-127, and Arg-170 each contribute to the DNA site. An FPG-type zinc finger spans residues 257–293 (SVYGREGKPCRNPACGGTVERVVQSGRSTFFCASCQT). The active-site Proton donor; for delta-elimination activity is Arg-283.

The protein belongs to the FPG family. In terms of assembly, monomer. Requires Zn(2+) as cofactor.

It carries out the reaction Hydrolysis of DNA containing ring-opened 7-methylguanine residues, releasing 2,6-diamino-4-hydroxy-5-(N-methyl)formamidopyrimidine.. The catalysed reaction is 2'-deoxyribonucleotide-(2'-deoxyribose 5'-phosphate)-2'-deoxyribonucleotide-DNA = a 3'-end 2'-deoxyribonucleotide-(2,3-dehydro-2,3-deoxyribose 5'-phosphate)-DNA + a 5'-end 5'-phospho-2'-deoxyribonucleoside-DNA + H(+). In terms of biological role, involved in base excision repair of DNA damaged by oxidation or by mutagenic agents. Acts as a DNA glycosylase that recognizes and removes damaged bases. Has a preference for oxidized purines, such as 7,8-dihydro-8-oxoguanine (8-oxoG). Has AP (apurinic/apyrimidinic) lyase activity and introduces nicks in the DNA strand. Cleaves the DNA backbone by beta-delta elimination to generate a single-strand break at the site of the removed base with both 3'- and 5'-phosphates. The protein is Formamidopyrimidine-DNA glycosylase of Brucella ovis (strain ATCC 25840 / 63/290 / NCTC 10512).